A 290-amino-acid polypeptide reads, in one-letter code: S-adenosylmethionine decarboxylase proenzyme (290 aa).

Ser-138 acts as the Schiff-base intermediate with substrate; via pyruvic acid in catalysis. Pyruvic acid (Ser); by autocatalysis is present on Ser-138. His-143 functions as the Proton acceptor; for processing activity in the catalytic mechanism. Cys-166 serves as the catalytic Proton donor; for catalytic activity.

The protein belongs to the prokaryotic AdoMetDC family. Type 2 subfamily. As to quaternary structure, heterooctamer of four alpha and four beta chains arranged as a tetramer of alpha/beta heterodimers. Pyruvate serves as cofactor. Is synthesized initially as an inactive proenzyme. Formation of the active enzyme involves a self-maturation process in which the active site pyruvoyl group is generated from an internal serine residue via an autocatalytic post-translational modification. Two non-identical subunits are generated from the proenzyme in this reaction, and the pyruvate is formed at the N-terminus of the alpha chain, which is derived from the carboxyl end of the proenzyme. The post-translation cleavage follows an unusual pathway, termed non-hydrolytic serinolysis, in which the side chain hydroxyl group of the serine supplies its oxygen atom to form the C-terminus of the beta chain, while the remainder of the serine residue undergoes an oxidative deamination to produce ammonia and the pyruvoyl group blocking the N-terminus of the alpha chain.

The catalysed reaction is S-adenosyl-L-methionine + H(+) = S-adenosyl 3-(methylsulfanyl)propylamine + CO2. The protein operates within amine and polyamine biosynthesis; S-adenosylmethioninamine biosynthesis; S-adenosylmethioninamine from S-adenosyl-L-methionine: step 1/1. Catalyzes the decarboxylation of S-adenosylmethionine to S-adenosylmethioninamine (dcAdoMet), the propylamine donor required for the synthesis of the polyamines spermine and spermidine from the diamine putrescine. The polypeptide is S-adenosylmethionine decarboxylase proenzyme (Heliobacterium modesticaldum (strain ATCC 51547 / Ice1)).